We begin with the raw amino-acid sequence, 296 residues long: Small ribosomal subunit protein uS2 (296 aa).

Residues 245 to 296 (WEAPAAGFAGATGTGWDGAAGDEWGAAPATTEWAASAAPAAASGEAAKETTW) form a disordered region. Positions 263-289 (AAGDEWGAAPATTEWAASAAPAAASGE) are enriched in low complexity.

Belongs to the universal ribosomal protein uS2 family. As to quaternary structure, component of the small ribosomal subunit. Mature ribosomes consist of a small (40S) and a large (60S) subunit. The 40S subunit contains about 33 different proteins and 1 molecule of RNA (18S). The 60S subunit contains about 49 different proteins and 3 molecules of RNA (25S, 5.8S and 5S). Interacts with RPS21.

The protein localises to the cytoplasm. Required for the assembly and/or stability of the 40S ribosomal subunit. Required for the processing of the 20S rRNA-precursor to mature 18S rRNA in a late step of the maturation of 40S ribosomal subunits. This chain is Small ribosomal subunit protein uS2, found in Fusarium vanettenii (strain ATCC MYA-4622 / CBS 123669 / FGSC 9596 / NRRL 45880 / 77-13-4) (Fusarium solani subsp. pisi).